Here is a 414-residue protein sequence, read N- to C-terminus: NAD-specific glutamate dehydrogenase (414 aa).

Residues Lys70 and Lys94 each coordinate substrate. The Proton donor role is filled by Lys106. NAD(+) contacts are provided by Thr190 and Asn221. Ser348 contributes to the substrate binding site.

Belongs to the Glu/Leu/Phe/Val dehydrogenases family. Homohexamer.

The enzyme catalyses L-glutamate + NAD(+) + H2O = 2-oxoglutarate + NH4(+) + NADH + H(+). This Staphylococcus aureus (strain COL) protein is NAD-specific glutamate dehydrogenase (gluD).